We begin with the raw amino-acid sequence, 104 residues long: Large ribosomal subunit protein uL24 (104 aa).

Belongs to the universal ribosomal protein uL24 family. Part of the 50S ribosomal subunit.

Functionally, one of two assembly initiator proteins, it binds directly to the 5'-end of the 23S rRNA, where it nucleates assembly of the 50S subunit. In terms of biological role, one of the proteins that surrounds the polypeptide exit tunnel on the outside of the subunit. The sequence is that of Large ribosomal subunit protein uL24 from Shewanella sp. (strain W3-18-1).